We begin with the raw amino-acid sequence, 876 residues long: Serrate RNA effector molecule homolog (876 aa).

A disordered region spans residues 1–90 (MGDSDDEYDR…RRDWDEHSSD (90 aa)). Gly2 is subject to N-acetylglycine. Ser4 is subject to Phosphoserine. Tyr8 bears the Phosphotyrosine mark. Residues 8–73 (YDRRRRDKFR…ERFSPPRHEL (66 aa)) show a composition bias toward basic and acidic residues. Ser67, Ser74, and Ser136 each carry phosphoserine. Residue Lys150 forms a Glycyl lysine isopeptide (Lys-Gly) (interchain with G-Cter in SUMO2) linkage. Residues 272-413 (EEEEQAGKPG…PKDAPGLECK (142 aa)) are disordered. Positions 297-347 (DGERKANEKDDKKEDGKQAENESSSDDKIKKSEGDGDKEEKKEDSEKEAKK) are enriched in basic and acidic residues. A compositionally biased stretch (acidic residues) spans 370–387 (SESESESGQAEEEKEEAD). Over residues 388–413 (ETLKEKEKPKEEEREKPKDAPGLECK) the composition is skewed to basic and acidic residues. Ser493 is subject to Phosphoserine. The residue at position 544 (Thr544) is a Phosphothreonine. A Phosphoserine modification is found at Ser570. Positions 575 to 597 (ELLGSSGGAPPEEPPKEGNPAEI) are disordered. The residue at position 671 (Thr671) is a Phosphothreonine. Ser679 carries the phosphoserine modification. Residues Arg833, Arg840, and Arg850 each carry the omega-N-methylarginine modification. A disordered region spans residues 835–854 (NYDAFRGQGGYPGKPRNRMV).

Belongs to the ARS2 family. As to quaternary structure, interacts with CASP8AP2, ERBB4, NCBP1/CBP80 and DROSHA. Interacts with LUZP4. Interacts with NCBP2/CBP20 and NCBP3. Interacts with MTREX.

It localises to the nucleus. The protein localises to the nucleoplasm. It is found in the cytoplasm. Its function is as follows. Acts as a mediator between the cap-binding complex (CBC) and the primary microRNAs (miRNAs) processing machinery during cell proliferation. Contributes to the stability and delivery of capped primary miRNA transcripts to the primary miRNA processing complex containing DGCR8 and DROSHA, thereby playing a role in RNA-mediated gene silencing (RNAi) by miRNAs. Binds capped RNAs (m7GpppG-capped RNA); however interaction is probably mediated via its interaction with NCBP1/CBP80 component of the CBC complex. Involved in cell cycle progression at S phase. Does not directly confer arsenite resistance but rather modulates arsenic sensitivity. Independently of its activity on miRNAs, necessary and sufficient to promote neural stem cell self-renewal. Does so by directly binding SOX2 promoter and positively regulating its transcription. This chain is Serrate RNA effector molecule homolog (SRRT), found in Bos taurus (Bovine).